We begin with the raw amino-acid sequence, 309 residues long: MVKVYAPASSANMSVGFDVLGAAVTPVDGALLGDVVSVEAADSFSLNNLGRFADKLPPEPRENIVYQCWERFCHALGKTIPVAMTLEKNMPIGSGLGSSACSVVAALVAMNEHCGKPLNDTRLLAMMGELEGRISGSVHYDNVAPCFLGGMQLMIEENGIISQQIPGFDEWLWVLAYPGIKVSTAEARAILPAQYRRQDCIAHGRHLAGFIHACYSRQPQLAAALMKDVIAEPYRARLLPGFSQARQAVAEIGALASGISGSGPTLFALCDKPETAQRVADWLSKHYLQNQEGFVHICRLDTAGARVLG.

Residue 91–101 (PIGSGLGSSAC) coordinates ATP.

It belongs to the GHMP kinase family. Homoserine kinase subfamily.

The protein resides in the cytoplasm. It catalyses the reaction L-homoserine + ATP = O-phospho-L-homoserine + ADP + H(+). The protein operates within amino-acid biosynthesis; L-threonine biosynthesis; L-threonine from L-aspartate: step 4/5. Its function is as follows. Catalyzes the ATP-dependent phosphorylation of L-homoserine to L-homoserine phosphate. This Salmonella arizonae (strain ATCC BAA-731 / CDC346-86 / RSK2980) protein is Homoserine kinase.